The sequence spans 174 residues: Actin-related protein 2/3 complex subunit 3 (174 aa).

The protein belongs to the ARPC3 family. Component of the Arp2/3 complex composed of arpB/Arp2, arpC/Arp3, arcA/p41-arc, arcB/p34-arc, arcC/p21-arc, arcD/p20-arc and arcE/p16-arc. Interacts with carmil (via the region between the LRR domain and COOH-terminal proline-rich domain); carmil is required for Arp2/3-dependent actin nucleation. Arp2/3 complex, MyoB, MyoC, and the alpha and beta subunits of capping protein all form a larger complex with carmil.

The protein localises to the cytoplasm. It is found in the cytoskeleton. Its subcellular location is the cytosol. The protein resides in the cell cortex. It localises to the cell projection. The protein localises to the pseudopodium. Functions as a component of the Arp2/3 complex which is involved in regulation of actin polymerization and together with an activating nucleation-promoting factor (NPF) mediates the formation of branched actin networks. Seems to contact the pointed end of the daughter actin filament. The Arp2/3 complex is involved in organizing the actin system in cell motility and chemotaxis, in phagocytosis and macropinocytosis, at late steps of endosome processing, and in mitosis. In concert with a group of other proteins, the Arp2/3 complex plays a general role in the rapid activation and adaptation of the actin system to its multiple functions. This is Actin-related protein 2/3 complex subunit 3 (arcC) from Dictyostelium discoideum (Social amoeba).